The primary structure comprises 337 residues: ATP-dependent 6-phosphofructokinase (337 aa).

Gly-11 serves as a coordination point for ATP. 21–25 (RAVVR) serves as a coordination point for ADP. ATP contacts are provided by residues 72–73 (RY) and 102–105 (GDGS). Asp-103 serves as a coordination point for Mg(2+). A substrate-binding site is contributed by 125 to 127 (TID). The active-site Proton acceptor is Asp-127. Arg-154 is an ADP binding site. Substrate contacts are provided by residues Arg-162 and 169-171 (MGR). ADP is bound by residues 185–187 (GAD), Arg-212, and 214–216 (KNH). Residues Glu-223, Arg-245, and 251-254 (HILR) contribute to the substrate site.

Belongs to the phosphofructokinase type A (PFKA) family. ATP-dependent PFK group I subfamily. Prokaryotic clade 'B1' sub-subfamily. As to quaternary structure, homotetramer. Mg(2+) is required as a cofactor.

It is found in the cytoplasm. It carries out the reaction beta-D-fructose 6-phosphate + ATP = beta-D-fructose 1,6-bisphosphate + ADP + H(+). Its pathway is carbohydrate degradation; glycolysis; D-glyceraldehyde 3-phosphate and glycerone phosphate from D-glucose: step 3/4. Its activity is regulated as follows. Allosterically activated by ADP and other diphosphonucleosides, and allosterically inhibited by phosphoenolpyruvate. Catalyzes the phosphorylation of D-fructose 6-phosphate to fructose 1,6-bisphosphate by ATP, the first committing step of glycolysis. This chain is ATP-dependent 6-phosphofructokinase, found in Streptococcus equi subsp. equi (strain 4047).